A 577-amino-acid chain; its full sequence is Putative laccase-1 (577 aa).

The N-terminal stretch at 1–28 (MGTAKIPALLWFLLAGLVLALAVNPAHG) is a signal peptide. 2 consecutive Plastocyanin-like domains span residues 37 to 153 (FITE…PKRG) and 163 to 316 (KEIP…YTDS). Residues Asn-42 and Asn-83 are each glycosylated (N-linked (GlcNAc...) asparagine). Residues His-87 and His-89 each coordinate Cu cation. Residue Asn-115 is glycosylated (N-linked (GlcNAc...) asparagine). Cu cation contacts are provided by His-132 and His-134. N-linked (GlcNAc...) asparagine glycosylation is found at Asn-276, Asn-304, Asn-382, and Asn-402. A Plastocyanin-like 3 domain is found at 442–561 (DINGGGPLLT…DTMFIVKDGK (120 aa)). Positions 478, 481, 483, 540, 541, 542, 546, and 551 each coordinate Cu cation.

Belongs to the multicopper oxidase family. Cu cation is required as a cofactor.

The protein resides in the secreted. The protein localises to the extracellular space. It is found in the apoplast. It carries out the reaction 4 hydroquinone + O2 = 4 benzosemiquinone + 2 H2O. Its function is as follows. Lignin degradation and detoxification of lignin-derived products. The sequence is that of Putative laccase-1 (LAC1) from Oryza sativa subsp. japonica (Rice).